The primary structure comprises 354 residues: Holliday junction branch migration complex subunit RuvB (354 aa).

The tract at residues 1–183 (MTGDNLVSAY…FGFVAHLDFY (183 aa)) is large ATPase domain (RuvB-L). ATP is bound by residues R23, G64, K67, T68, S69, 130–132 (EDF), R173, Y183, and R220. Position 68 (T68) interacts with Mg(2+). The interval 184 to 254 (SPADLETLLN…TAQAALTVYD (71 aa)) is small ATPAse domain (RuvB-S). Residues 257–354 (ALGLDRLDRA…DLFSVEPDQP (98 aa)) are head domain (RuvB-H). DNA-binding residues include R312 and R317.

This sequence belongs to the RuvB family. In terms of assembly, homohexamer. Forms an RuvA(8)-RuvB(12)-Holliday junction (HJ) complex. HJ DNA is sandwiched between 2 RuvA tetramers; dsDNA enters through RuvA and exits via RuvB. An RuvB hexamer assembles on each DNA strand where it exits the tetramer. Each RuvB hexamer is contacted by two RuvA subunits (via domain III) on 2 adjacent RuvB subunits; this complex drives branch migration. In the full resolvosome a probable DNA-RuvA(4)-RuvB(12)-RuvC(2) complex forms which resolves the HJ.

The protein resides in the cytoplasm. The catalysed reaction is ATP + H2O = ADP + phosphate + H(+). In terms of biological role, the RuvA-RuvB-RuvC complex processes Holliday junction (HJ) DNA during genetic recombination and DNA repair, while the RuvA-RuvB complex plays an important role in the rescue of blocked DNA replication forks via replication fork reversal (RFR). RuvA specifically binds to HJ cruciform DNA, conferring on it an open structure. The RuvB hexamer acts as an ATP-dependent pump, pulling dsDNA into and through the RuvAB complex. RuvB forms 2 homohexamers on either side of HJ DNA bound by 1 or 2 RuvA tetramers; 4 subunits per hexamer contact DNA at a time. Coordinated motions by a converter formed by DNA-disengaged RuvB subunits stimulates ATP hydrolysis and nucleotide exchange. Immobilization of the converter enables RuvB to convert the ATP-contained energy into a lever motion, pulling 2 nucleotides of DNA out of the RuvA tetramer per ATP hydrolyzed, thus driving DNA branch migration. The RuvB motors rotate together with the DNA substrate, which together with the progressing nucleotide cycle form the mechanistic basis for DNA recombination by continuous HJ branch migration. Branch migration allows RuvC to scan DNA until it finds its consensus sequence, where it cleaves and resolves cruciform DNA. This chain is Holliday junction branch migration complex subunit RuvB, found in Salinispora tropica (strain ATCC BAA-916 / DSM 44818 / JCM 13857 / NBRC 105044 / CNB-440).